The following is a 151-amino-acid chain: Macrodomain Ter protein (151 aa).

It belongs to the MatP family. In terms of assembly, homodimer.

It is found in the cytoplasm. In terms of biological role, required for spatial organization of the terminus region of the chromosome (Ter macrodomain) during the cell cycle. Prevents early segregation of duplicated Ter macrodomains during cell division. Binds specifically to matS, which is a 13 bp signature motif repeated within the Ter macrodomain. This chain is Macrodomain Ter protein, found in Photorhabdus laumondii subsp. laumondii (strain DSM 15139 / CIP 105565 / TT01) (Photorhabdus luminescens subsp. laumondii).